The sequence spans 880 residues: Alanine--tRNA ligase (880 aa).

Residues His567, His571, Cys669, and His673 each contribute to the Zn(2+) site.

Belongs to the class-II aminoacyl-tRNA synthetase family. Zn(2+) serves as cofactor.

Its subcellular location is the cytoplasm. The enzyme catalyses tRNA(Ala) + L-alanine + ATP = L-alanyl-tRNA(Ala) + AMP + diphosphate. In terms of biological role, catalyzes the attachment of alanine to tRNA(Ala) in a two-step reaction: alanine is first activated by ATP to form Ala-AMP and then transferred to the acceptor end of tRNA(Ala). Also edits incorrectly charged Ser-tRNA(Ala) and Gly-tRNA(Ala) via its editing domain. The chain is Alanine--tRNA ligase from Syntrophomonas wolfei subsp. wolfei (strain DSM 2245B / Goettingen).